The following is a 463-amino-acid chain: Endoglucanase EG-1 (463 aa).

An N-terminal signal peptide occupies residues 1–22 (MAPSATLPLTTAILAIGRLVAA). The tract at residues 23 to 397 (QQPGTSTPEV…DIGSTTNSTG (375 aa)) is catalytic. N-linked (GlcNAc...) asparagine glycans are attached at residues N78, N164, N204, and N208. The Nucleophile role is filled by E218. E223 serves as the catalytic Proton donor. The disordered stretch occupies residues 390-429 (GSTTNSTGGNPPPPPPPASSTTFSTTRRSSTTSSSPSCTQ). The N-linked (GlcNAc...) asparagine glycan is linked to N394. The segment at 402–427 (PPPPPASSTTFSTTRRSSTTSSSPSC) is linker. Over residues 408–429 (SSTTFSTTRRSSTTSSSPSCTQ) the composition is skewed to low complexity. The CBM1 domain occupies 427 to 463 (CTQTHWGQCGGIGYTGCKTCTSGTTCQYGNDYYSQCL). 2 disulfide bridges follow: C435–C452 and C446–C462.

This sequence belongs to the glycosyl hydrolase 7 (cellulase C) family.

The protein resides in the secreted. The enzyme catalyses Endohydrolysis of (1-&gt;4)-beta-D-glucosidic linkages in cellulose, lichenin and cereal beta-D-glucans.. Functionally, the biological conversion of cellulose to glucose generally requires three types of hydrolytic enzymes: (1) Endoglucanases which cut internal beta-1,4-glucosidic bonds; (2) Exocellobiohydrolases that cut the disaccharide cellobiose from the non-reducing end of the cellulose polymer chain; (3) Beta-1,4-glucosidases which hydrolyze the cellobiose and other short cello-oligosaccharides to glucose. The chain is Endoglucanase EG-1 (egl1) from Trichoderma longibrachiatum.